Reading from the N-terminus, the 424-residue chain is Dihydroorotase (424 aa).

Zn(2+)-binding residues include histidine 60 and histidine 62. Substrate-binding positions include 62-64 and asparagine 94; that span reads HFR. Residues aspartate 151, histidine 178, and histidine 231 each coordinate Zn(2+). Asparagine 277 contacts substrate. Aspartate 304 provides a ligand contact to Zn(2+). The active site involves aspartate 304. Position 308 (histidine 308) interacts with substrate.

Belongs to the metallo-dependent hydrolases superfamily. DHOase family. Class I DHOase subfamily. Zn(2+) serves as cofactor.

It catalyses the reaction (S)-dihydroorotate + H2O = N-carbamoyl-L-aspartate + H(+). It functions in the pathway pyrimidine metabolism; UMP biosynthesis via de novo pathway; (S)-dihydroorotate from bicarbonate: step 3/3. Functionally, catalyzes the reversible cyclization of carbamoyl aspartate to dihydroorotate. In Clostridium acetobutylicum (strain ATCC 824 / DSM 792 / JCM 1419 / IAM 19013 / LMG 5710 / NBRC 13948 / NRRL B-527 / VKM B-1787 / 2291 / W), this protein is Dihydroorotase.